The chain runs to 597 residues: MPSPQLLVLFGSQTGTAQDVSERLGREARRRRLGCRVQALDSYPVVNLINEPLVIFVCATTGQGDPPDNMKNFWRFIFRKNLPSTALCQMDFAVLGLGDSSYAKFNFVAKKLHRRLLQLGGSALLPVCLGDDQHELGPDAAVDPWLRDLWDRVLGLYPPPPGLTEIPPGVPLPSKFTLLFLQEAPSTGSEGQRVAHPGSQEPPSESKPFLAPMISNQRVTGPSHFQDVRLIEFDILGSGISFAAGDVVLIQPSNSAAHVQRFCQVLGLDPDQLFMLQPREPDVSSPTRLPQPCSMRHLVSHYLDIASVPRRSFFELLACLSLHELEREKLLEFSSAQGQEELFEYCNRPRRTILEVLCDFPHTAAAIPPDYLLDLIPVIRPRAFSIASSLLTHPSRLQILVAVVQFQTRLKEPRRGLCSSWLASLDPGQGPVRVPLWVRPGSLAFPETPDTPVIMVGPGTGVAPFRAAIQERVAQGQTGNFLFFGCRWRDQDFYWEAEWQELEKRDCLTLIPAFSREQEQKVYVQHRLRELGSLVWELLDRQGAYFYLAGNAKSMPADVSEALMSIFQEEGGLCSPDAAAYLARLQQTRRFQTETWA.

Residues 6-150 (LLVLFGSQTG…AVDPWLRDLW (145 aa)) enclose the Flavodoxin-like domain. FMN is bound by residues 12-17 (SQTGTA), 59-62 (ATTG), 97-106 (LGDSSYAKFN), and Asp132. Positions 188–207 (GSEGQRVAHPGSQEPPSESK) are disordered. One can recognise an FAD-binding FR-type domain in the interval 206 to 447 (SKPFLAPMIS…VRPGSLAFPE (242 aa)). FAD-binding positions include Arg350, 382–385 (RAFS), and 416–419 (GLCS). Residues Thr460, 515–516 (SR), 521–525 (KVYVQ), and Asp558 each bind NADP(+). Trp596 serves as a coordination point for FAD.

Belongs to the NADPH-dependent diflavin oxidoreductase NDOR1 family. It in the N-terminal section; belongs to the flavodoxin family. This sequence in the C-terminal section; belongs to the flavoprotein pyridine nucleotide cytochrome reductase family. Interacts with CIAPIN1; as part of the cytosolic iron-sulfur (Fe-S) protein assembly (CIA) machinery. Interacts with DCPS. Requires FAD as cofactor. The cofactor is FMN. As to expression, low expression in brain, heart, kidney, pancreas, prostate and skeletal muscle. Highest levels in the placenta. Expressed in cancer cell lines including promyelocytic leukemia, HeLaS3, chronic myelagenous leukemia, lymphoblastic leukemia, Burkitt's lymphoma, colorectal adenocarcinoma, lung carcinoma, and melanoma G-361.

It localises to the cytoplasm. The protein resides in the perinuclear region. It carries out the reaction 2 oxidized [2Fe-2S]-[protein] + NADPH = 2 reduced [2Fe-2S]-[protein] + NADP(+) + H(+). In terms of biological role, NADPH-dependent reductase which is a central component of the cytosolic iron-sulfur (Fe-S) protein assembly (CIA) machinery. Transfers electrons from NADPH via its FAD and FMN prosthetic groups to the [2Fe-2S] cluster of CIAPIN1, another key component of the CIA machinery. In turn, this reduced cluster provides electrons for assembly of cytosolic iron-sulfur cluster proteins. It can also reduce the [2Fe-2S] cluster of CISD1 and activate this protein implicated in Fe/S cluster repair. In vitro can fully activate methionine synthase/MTR in the presence of soluble cytochrome b5/CYB5A. This Homo sapiens (Human) protein is NADPH-dependent diflavin oxidoreductase 1.